The chain runs to 397 residues: Acetate kinase (397 aa).

Mg(2+) is bound at residue N7. K14 contacts ATP. R91 contributes to the substrate binding site. The active-site Proton donor/acceptor is D147. ATP-binding positions include 207 to 211, 282 to 284, and 330 to 334; these read HLGNG, DFR, and GLGEN. Residue E383 participates in Mg(2+) binding.

The protein belongs to the acetokinase family. Homodimer. Requires Mg(2+) as cofactor. Mn(2+) is required as a cofactor.

It localises to the cytoplasm. It carries out the reaction acetate + ATP = acetyl phosphate + ADP. The protein operates within metabolic intermediate biosynthesis; acetyl-CoA biosynthesis; acetyl-CoA from acetate: step 1/2. Functionally, catalyzes the formation of acetyl phosphate from acetate and ATP. Can also catalyze the reverse reaction. The sequence is that of Acetate kinase from Moorella thermoacetica (strain ATCC 39073 / JCM 9320).